Consider the following 281-residue polypeptide: Glyoxalase 1 (281 aa).

VOC domains are found at residues 4–127 (RALH…IGKA) and 132–251 (KVLR…FVGD).

This sequence belongs to the glyoxalase I family. In terms of tissue distribution, expressed in the following tissues in both larvae and adults: pharynx, pharyngeal-intestinal valve, intestine, anal sphincter, vulval muscle, seam cells and the nervous system.

Its function is as follows. Thought to act as a glyoxalase. May remove methylglyoxal from mitochondrial proteins. Has roles in reducing oxidative stress and increasing lifespan. The chain is Glyoxalase 1 (glod-4) from Caenorhabditis elegans.